The following is a 78-amino-acid chain: Teretoxin Tsu6.15 (78 aa).

The first 21 residues, 1 to 21 (MATSGRLLCFCLVLGLVFESL), serve as a signal peptide directing secretion. Positions 22–47 (GYSEARPPRDRKRTVTAKRYDPLAQR) are excised as a propeptide.

The protein belongs to the teretoxin M (TM) superfamily. In terms of processing, contains 3 disulfide bonds. In terms of tissue distribution, expressed by the venom duct.

It is found in the secreted. The polypeptide is Teretoxin Tsu6.15 (Terebra subulata (Chocolate spotted auger)).